Consider the following 297-residue polypeptide: UTP--glucose-1-phosphate uridylyltransferase (297 aa).

The protein belongs to the UDPGP type 2 family.

The catalysed reaction is alpha-D-glucose 1-phosphate + UTP + H(+) = UDP-alpha-D-glucose + diphosphate. Its pathway is carbohydrate metabolism; nucleotide-sugar metabolism. It functions in the pathway bacterial outer membrane biogenesis; lipopolysaccharide biosynthesis. May play a role in stationary phase survival. The chain is UTP--glucose-1-phosphate uridylyltransferase (galF) from Salmonella typhimurium (strain LT2 / SGSC1412 / ATCC 700720).